A 588-amino-acid chain; its full sequence is MSFARIFITILLLFILRRAFKWLKMIVDARSIGLPMVFVPMDQTNFLWVLLSSRNRFRLQSLLPLWLWKRLSITIPGWELFEPSNPLETSPTSRTEATDTSFILVGLRTYDFWTADPQVAHEVLRRIHDFEQPRELEFLLAKFGPNVLTANGDQWARHRKIVTKVINERISKAVFESSIYYCRRILHDVLTTSPDKSSSVETTMLFDKLTQISFSILIGVGIGDKFPWYDEEKQEPEPPYQMAYKDALLTYVNNAFGVAILPPRLLNHWPSWAPGHKKMRTVGRSMTEFCMRNKSLIDQEQNRIARGETSTSSNADFIALLVQASQSGEDSQQSLSENEMISNLFAFTAGGYKTIAGALDFAVVLLARFPLWQDWLIEEVDSLIPADGDGSEPLEYTTIYPQAVRTLAFVMETERLYGSASRLFRIASGPQTIQVSSGTTVRLPAKTRVHINVVALHHLPSWRDINHQSDPDRFKPSPDAPDEKLFRPSRWINPPGSKYTHFHPPKGTFVPWSQGPRICPGQKMAQVEITTLILCLLRRHRIEPSRLEGETLQDAERGLDAKLQNVQWGGIVSLEKDPHLKFRVSQRR.

A signal peptide spans 1–21; it reads MSFARIFITILLLFILRRAFK. N-linked (GlcNAc...) asparagine glycosylation occurs at N293. Over residues 467–486 the composition is skewed to basic and acidic residues; the sequence is HQSDPDRFKPSPDAPDEKLF. The tract at residues 467–490 is disordered; sequence HQSDPDRFKPSPDAPDEKLFRPSR. A heme-binding site is contributed by C519.

It belongs to the cytochrome P450 family. Heme serves as cofactor.

The protein operates within secondary metabolite biosynthesis. In terms of biological role, cytochrome P450 monooxygenase; part of the gene cluster that mediates the biosynthesis of phomenoic acid, a long chain aliphatic carboxylic acid that does not appear to be essential for pathogenicity but may play a role in allowing to outcompete other fungi in the environmental niche via its antifungal properties. The polyketide synthase produces the long methylated aliphatic carboxylic acid chain of phomenoic acid. The cluster-specific cytochrome P450 monooxygenase may then hydroxylate the methyl group of carbon 31. The putative dehydrogenase YogA, which has no obvious role in phomenoic acid biosynthesis, may further modify phomenoic acid to produce a compound not identified yet. This is Phomenoic acid biosynthesis cluster cytochrome P450 monooxygenase from Leptosphaeria maculans (strain JN3 / isolate v23.1.3 / race Av1-4-5-6-7-8) (Blackleg fungus).